A 248-amino-acid chain; its full sequence is 4-hydroxy-tetrahydrodipicolinate reductase (248 aa).

NAD(+) is bound by residues 9-14, 77-79, and 104-107; these read GAQGRV, GTT, and APNF. His-134 functions as the Proton donor/acceptor in the catalytic mechanism. Residue His-135 participates in (S)-2,3,4,5-tetrahydrodipicolinate binding. The active-site Proton donor is Lys-138. 144–145 provides a ligand contact to (S)-2,3,4,5-tetrahydrodipicolinate; the sequence is GT. The segment at 157–176 is disordered; sequence RREAGMPTQPDATEQSLDGA.

This sequence belongs to the DapB family.

It localises to the cytoplasm. It carries out the reaction (S)-2,3,4,5-tetrahydrodipicolinate + NAD(+) + H2O = (2S,4S)-4-hydroxy-2,3,4,5-tetrahydrodipicolinate + NADH + H(+). It catalyses the reaction (S)-2,3,4,5-tetrahydrodipicolinate + NADP(+) + H2O = (2S,4S)-4-hydroxy-2,3,4,5-tetrahydrodipicolinate + NADPH + H(+). Its pathway is amino-acid biosynthesis; L-lysine biosynthesis via DAP pathway; (S)-tetrahydrodipicolinate from L-aspartate: step 4/4. In terms of biological role, catalyzes the conversion of 4-hydroxy-tetrahydrodipicolinate (HTPA) to tetrahydrodipicolinate. In Corynebacterium diphtheriae (strain ATCC 700971 / NCTC 13129 / Biotype gravis), this protein is 4-hydroxy-tetrahydrodipicolinate reductase.